The following is a 264-amino-acid chain: Phosphatidylserine decarboxylase proenzyme (264 aa).

Active-site charge relay system; for autoendoproteolytic cleavage activity residues include aspartate 86, histidine 142, and serine 226. The Schiff-base intermediate with substrate; via pyruvic acid; for decarboxylase activity role is filled by serine 226. Serine 226 is modified (pyruvic acid (Ser); by autocatalysis).

Belongs to the phosphatidylserine decarboxylase family. PSD-B subfamily. Prokaryotic type I sub-subfamily. Heterodimer of a large membrane-associated beta subunit and a small pyruvoyl-containing alpha subunit. Pyruvate serves as cofactor. Post-translationally, is synthesized initially as an inactive proenzyme. Formation of the active enzyme involves a self-maturation process in which the active site pyruvoyl group is generated from an internal serine residue via an autocatalytic post-translational modification. Two non-identical subunits are generated from the proenzyme in this reaction, and the pyruvate is formed at the N-terminus of the alpha chain, which is derived from the carboxyl end of the proenzyme. The autoendoproteolytic cleavage occurs by a canonical serine protease mechanism, in which the side chain hydroxyl group of the serine supplies its oxygen atom to form the C-terminus of the beta chain, while the remainder of the serine residue undergoes an oxidative deamination to produce ammonia and the pyruvoyl prosthetic group on the alpha chain. During this reaction, the Ser that is part of the protease active site of the proenzyme becomes the pyruvoyl prosthetic group, which constitutes an essential element of the active site of the mature decarboxylase.

The protein localises to the cell membrane. It carries out the reaction a 1,2-diacyl-sn-glycero-3-phospho-L-serine + H(+) = a 1,2-diacyl-sn-glycero-3-phosphoethanolamine + CO2. It participates in phospholipid metabolism; phosphatidylethanolamine biosynthesis; phosphatidylethanolamine from CDP-diacylglycerol: step 2/2. Catalyzes the formation of phosphatidylethanolamine (PtdEtn) from phosphatidylserine (PtdSer). The protein is Phosphatidylserine decarboxylase proenzyme of Geobacillus kaustophilus (strain HTA426).